The following is a 313-amino-acid chain: Glutaminase (313 aa).

Substrate is bound by residues S73, N123, E167, N174, Y198, Y249, and V267.

The protein belongs to the glutaminase family. In terms of assembly, homotetramer.

It catalyses the reaction L-glutamine + H2O = L-glutamate + NH4(+). The sequence is that of Glutaminase from Streptomyces avermitilis (strain ATCC 31267 / DSM 46492 / JCM 5070 / NBRC 14893 / NCIMB 12804 / NRRL 8165 / MA-4680).